The primary structure comprises 307 residues: Acetaldehyde dehydrogenase 1 (307 aa).

The active-site Acyl-thioester intermediate is C132. Residues 163 to 171 (SVGPGTRKN) and N274 each bind NAD(+).

The protein belongs to the acetaldehyde dehydrogenase family.

The enzyme catalyses acetaldehyde + NAD(+) + CoA = acetyl-CoA + NADH + H(+). The protein is Acetaldehyde dehydrogenase 1 (tesF) of Comamonas testosteroni (Pseudomonas testosteroni).